Reading from the N-terminus, the 298-residue chain is Bifunctional protein FolD (298 aa).

Residues 167 to 169, serine 192, and isoleucine 233 each bind NADP(+); that span reads GRS.

The protein belongs to the tetrahydrofolate dehydrogenase/cyclohydrolase family. As to quaternary structure, homodimer.

It carries out the reaction (6R)-5,10-methylene-5,6,7,8-tetrahydrofolate + NADP(+) = (6R)-5,10-methenyltetrahydrofolate + NADPH. The enzyme catalyses (6R)-5,10-methenyltetrahydrofolate + H2O = (6R)-10-formyltetrahydrofolate + H(+). The protein operates within one-carbon metabolism; tetrahydrofolate interconversion. Its function is as follows. Catalyzes the oxidation of 5,10-methylenetetrahydrofolate to 5,10-methenyltetrahydrofolate and then the hydrolysis of 5,10-methenyltetrahydrofolate to 10-formyltetrahydrofolate. The protein is Bifunctional protein FolD of Caulobacter sp. (strain K31).